The following is a 481-amino-acid chain: GTPase Obg (481 aa).

The region spanning 2–159 (TTFVDRVVLH…LDAVLELKSV (158 aa)) is the Obg domain. Residues 160 to 330 (ADIGLVGYPS…LMFAMGELVA (171 aa)) form the OBG-type G domain. GTP contacts are provided by residues 166–173 (GYPSAGKS), 191–195 (FTTLV), 212–215 (DVPG), 282–285 (NKID), and 311–313 (SAA). Ser-173 and Thr-193 together coordinate Mg(2+). The OCT domain maps to 348–426 (PKAVDDAGFT…IGEREFDWHP (79 aa)). The interval 440-481 (DQRLAEKTQRPSAAERLAARKARRQRPGDEPESDELDGDSGE) is disordered. Positions 469 to 481 (EPESDELDGDSGE) are enriched in acidic residues.

The protein belongs to the TRAFAC class OBG-HflX-like GTPase superfamily. OBG GTPase family. Monomer. Requires Mg(2+) as cofactor.

The protein resides in the cytoplasm. Its function is as follows. An essential GTPase which binds GTP, GDP and possibly (p)ppGpp with moderate affinity, with high nucleotide exchange rates and a fairly low GTP hydrolysis rate. Plays a role in control of the cell cycle, stress response, ribosome biogenesis and in those bacteria that undergo differentiation, in morphogenesis control. The protein is GTPase Obg of Salinispora arenicola (strain CNS-205).